The sequence spans 179 residues: MRIEVWQGDITELDVDVIVNAANESLLGGGGVDGAIHRAAGPRLLEACEALPQVRPGVRCPTGEIRITDGFDLKARHIFHTVGPVWRDGRHNEPEQLANCYWQSLKLAEQMMLHSIAFPAISCGIYGYPLHQAARIAVTETRDWQRSHKVPKHIVLVAYNEATYKAYQQALATQETAAA.

The 175-residue stretch at 1–175 (MRIEVWQGDI…AYQQALATQE (175 aa)) folds into the Macro domain.

It belongs to the MacroD-type family.

The chain is Macro domain-containing protein XAC3343 from Xanthomonas axonopodis pv. citri (strain 306).